Reading from the N-terminus, the 101-residue chain is Small ribosomal subunit protein uS14 (101 aa).

Residues 1 to 21 (MAKVSLIKKNESRKKKSQSLH) are disordered. Over residues 11-21 (ESRKKKSQSLH) the composition is skewed to basic residues.

Belongs to the universal ribosomal protein uS14 family. As to quaternary structure, part of the 30S ribosomal subunit. Contacts proteins S3 and S10.

In terms of biological role, binds 16S rRNA, required for the assembly of 30S particles and may also be responsible for determining the conformation of the 16S rRNA at the A site. This is Small ribosomal subunit protein uS14 from Rickettsia canadensis (strain McKiel).